The following is a 248-amino-acid chain: Adenosylcobinamide-GDP ribazoletransferase (248 aa).

Transmembrane regions (helical) follow at residues 24–44 (EINLKKGSALLPFVGVIIGAW), 70–90 (VIITGGFHVDALADTADGLFS), 106–126 (VGANGVIAICFYFLFYGALFL), 134–154 (ICWLFFVLPIVAKGVTMLLFA), 168–188 (IFLGVPWWPIVIAQVIVLAVL), 189–209 (GLFFSYVGVIAYVGVILFTII), and 228–248 (AGGQMGQLICLFCLVLLWGLV).

The protein belongs to the CobS family. It depends on Mg(2+) as a cofactor.

It localises to the cell membrane. The enzyme catalyses alpha-ribazole + adenosylcob(III)inamide-GDP = adenosylcob(III)alamin + GMP + H(+). The catalysed reaction is alpha-ribazole 5'-phosphate + adenosylcob(III)inamide-GDP = adenosylcob(III)alamin 5'-phosphate + GMP + H(+). Its pathway is cofactor biosynthesis; adenosylcobalamin biosynthesis; adenosylcobalamin from cob(II)yrinate a,c-diamide: step 7/7. Its function is as follows. Joins adenosylcobinamide-GDP and alpha-ribazole to generate adenosylcobalamin (Ado-cobalamin). Also synthesizes adenosylcobalamin 5'-phosphate from adenosylcobinamide-GDP and alpha-ribazole 5'-phosphate. This chain is Adenosylcobinamide-GDP ribazoletransferase, found in Listeria monocytogenes serovar 1/2a (strain ATCC BAA-679 / EGD-e).